The primary structure comprises 245 residues: Cytochrome c oxidase subunit 2 (245 aa).

The Mitochondrial intermembrane segment spans residues 1–36; the sequence is MYMLNNMLNDVPTPWGMFFQDSATPNMEGMMELHNN. A helical membrane pass occupies residues 37–56; it reads VMFYLCMMLGFVSYMLYNML. The Mitochondrial matrix segment spans residues 57 to 76; that stretch reads TTYNHSVLPYKYLYHGQFIE. Residues 77 to 101 form a helical membrane-spanning segment; it reads IVWTTFPAMILLIIAFPSFILLYIC. Residues 102-245 are Mitochondrial intermembrane-facing; sequence DEVIAPAMTI…GEFLAWIDEQ (144 aa). 6 residues coordinate Cu cation: His180, Cys215, Glu217, Cys219, His223, and Met226. A Mg(2+)-binding site is contributed by Glu217.

Belongs to the cytochrome c oxidase subunit 2 family. Component of the cytochrome c oxidase (complex IV, CIV), a multisubunit enzyme composed of a catalytic core of 3 subunits and several supernumerary subunits. The complex exists as a monomer or a dimer and forms supercomplexes (SCs) in the inner mitochondrial membrane with ubiquinol-cytochrome c oxidoreductase (cytochrome b-c1 complex, complex III, CIII). Cu cation is required as a cofactor.

It is found in the mitochondrion inner membrane. The enzyme catalyses 4 Fe(II)-[cytochrome c] + O2 + 8 H(+)(in) = 4 Fe(III)-[cytochrome c] + 2 H2O + 4 H(+)(out). Functionally, component of the cytochrome c oxidase, the last enzyme in the mitochondrial electron transport chain which drives oxidative phosphorylation. The respiratory chain contains 3 multisubunit complexes succinate dehydrogenase (complex II, CII), ubiquinol-cytochrome c oxidoreductase (cytochrome b-c1 complex, complex III, CIII) and cytochrome c oxidase (complex IV, CIV), that cooperate to transfer electrons derived from NADH and succinate to molecular oxygen, creating an electrochemical gradient over the inner membrane that drives transmembrane transport and the ATP synthase. Cytochrome c oxidase is the component of the respiratory chain that catalyzes the reduction of oxygen to water. Electrons originating from reduced cytochrome c in the intermembrane space (IMS) are transferred via the dinuclear copper A center (CU(A)) of subunit 2 and heme A of subunit 1 to the active site in subunit 1, a binuclear center (BNC) formed by heme A3 and copper B (CU(B)). The BNC reduces molecular oxygen to 2 water molecules using 4 electrons from cytochrome c in the IMS and 4 protons from the mitochondrial matrix. The sequence is that of Cytochrome c oxidase subunit 2 (COX2) from Dekkera bruxellensis (Brettanomyces custersii).